The sequence spans 547 residues: (R)-citramalate synthase (547 aa).

Residues 8–278 (LWLYDTTLRD…YDCIEPEKLA (271 aa)) form the Pyruvate carboxyltransferase domain.

This sequence belongs to the alpha-IPM synthase/homocitrate synthase family.

The enzyme catalyses pyruvate + acetyl-CoA + H2O = (3R)-citramalate + CoA + H(+). It participates in amino-acid biosynthesis; L-isoleucine biosynthesis; 2-oxobutanoate from pyruvate: step 1/3. In terms of biological role, catalyzes the condensation of pyruvate and acetyl-coenzyme A to form (R)-citramalate. The polypeptide is (R)-citramalate synthase (Synechocystis sp. (strain ATCC 27184 / PCC 6803 / Kazusa)).